We begin with the raw amino-acid sequence, 118 residues long: Co-chaperonin GroES (118 aa).

The protein belongs to the GroES chaperonin family. As to quaternary structure, heptamer of 7 subunits arranged in a ring. Interacts with the chaperonin GroEL.

It is found in the cytoplasm. Its function is as follows. Together with the chaperonin GroEL, plays an essential role in assisting protein folding. The GroEL-GroES system forms a nano-cage that allows encapsulation of the non-native substrate proteins and provides a physical environment optimized to promote and accelerate protein folding. GroES binds to the apical surface of the GroEL ring, thereby capping the opening of the GroEL channel. This chain is Co-chaperonin GroES, found in Helicobacter pylori (strain HPAG1).